A 483-amino-acid polypeptide reads, in one-letter code: RNA-binding protein Nova-1 (483 aa).

The disordered stretch occupies residues 1–44 (MMAAAPIQQNGTHTGVPIDLDPPDSRKRPLEAPPEAGSTKRTNT). The Bipartite nuclear localization signal motif lies at 27–43 (KRPLEAPPEAGSTKRTN). KH domains lie at 49 to 116 (QYFL…HGFI), 147 to 213 (IKQV…VELI), and 397 to 464 (KDVV…QYLI). Positions 395-479 (GSKDVVEIAV…YEQGVRAANP (85 aa)) are required for RNA binding.

Interacts with PTBP2; the interaction is direct.

It localises to the nucleus. Its function is as follows. Functions to regulate alternative splicing in neurons by binding pre-mRNA in a sequence-specific manner to activate exon inclusion or exclusion. It binds specifically to the sequences 5'-YCAY-3' and regulates splicing in only a subset of regulated exons. Binding to an exonic 5'-YCAY-3' cluster changes the protein complexes assembled on pre-mRNA, blocking U1 snRNP binding and exon inclusion, whereas binding to an intronic 5'-YCAY-3' cluster enhances spliceosome assembly and exon inclusion. Binding to 5'-YCAY-3' clusters results in a local and asymmetric action to regulate spliceosome assembly and alternative splicing in neurons. Binding to an exonic 5'-YCAY-3' cluster changed the protein complexes assembled on pre-mRNA, blocking U1 snRNP (small nuclear ribonucleoprotein) binding and exon inclusion, whereas binding to an intronic 5'-YCAY-3' cluster enhanced spliceosome assembly and exon inclusion. With NOVA1, they perform unique biological functions in different brain areas and cell types. Autoregulates its own expression by acting as a splicing repressor. Acts to activate the inclusion of exon E3A in the glycine receptor alpha-2 chain and of exon E9 in gamma-aminobutyric-acid receptor gamma-2 subunit via a distal downstream UCAU-rich intronic splicing enhancer. Acts to regulate a novel glycine receptor alpha-2 chain splice variant (alpha-2N) in developing spinal cord. This is RNA-binding protein Nova-1 (NOVA1) from Macaca fascicularis (Crab-eating macaque).